Reading from the N-terminus, the 357-residue chain is GTPase Obg (357 aa).

The region spanning 1 to 159 is the Obg domain; that stretch reads MKFVDEAEIQ…RTLKLELKLL (159 aa). Residues 160–343 form the OBG-type G domain; that stretch reads ADIGMLGFPN…IMKSAMTLFE (184 aa). GTP-binding positions include 166–173, 191–195, 213–216, 293–296, and 324–326; these read GFPNVGKS, FTTLY, DVPG, NKAD, and SAV. 2 residues coordinate Mg(2+): S173 and T193.

The protein belongs to the TRAFAC class OBG-HflX-like GTPase superfamily. OBG GTPase family. As to quaternary structure, monomer. Mg(2+) is required as a cofactor.

Its subcellular location is the cytoplasm. Functionally, an essential GTPase which binds GTP, GDP and possibly (p)ppGpp with moderate affinity, with high nucleotide exchange rates and a fairly low GTP hydrolysis rate. Plays a role in control of the cell cycle, stress response, ribosome biogenesis and in those bacteria that undergo differentiation, in morphogenesis control. The chain is GTPase Obg from Xylella fastidiosa (strain M23).